Consider the following 174-residue polypeptide: I-Kappa-B like protein C1 (174 aa).

ANK repeat units follow at residues 56–88 (RGRQ…DINA) and 93–123 (TGNS…NLGA).

This sequence belongs to the polydnaviridae I-Kappa-B-like protein family.

In terms of biological role, suppresses the host immune response through NF-kappa-B inactivation. Possesses ankyrin repeat domains required for NF-kappa-B binding but lacks the regulatory regions required for dissociation from NF-kappa-B and degradation. Therefore, prevents host NF-kappa-B release and subsequent activation. This Microplitis demolitor bracovirus (isolate Webb) (MdBV) protein is I-Kappa-B like protein C1 (C1).